A 1379-amino-acid polypeptide reads, in one-letter code: Hepatocyte growth factor receptor (1379 aa).

The N-terminal stretch at 1–24 is a signal peptide; it reads MKAPTVLAPGILVLLLSLVQRSHG. At 25 to 931 the chain is on the extracellular side; sequence ECKEALVKSE…VIVQPDQNFA (907 aa). The Sema domain maps to 27-514; sequence KEALVKSEMN…TGKKITKIPL (488 aa). An N-linked (GlcNAc...) asparagine glycan is attached at Asn-45. 4 disulfides stabilise this stretch: Cys-95–Cys-101, Cys-98–Cys-160, Cys-133–Cys-141, and Cys-171–Cys-174. Asn-106 carries an N-linked (GlcNAc...) asparagine glycan. N-linked (GlcNAc...) asparagine glycosylation is found at Asn-201 and Asn-357. Intrachain disulfides connect Cys-297–Cys-362 and Cys-384–Cys-396. N-linked (GlcNAc...) asparagine glycans are attached at residues Asn-398 and Asn-404. 4 disulfides stabilise this stretch: Cys-519-Cys-537, Cys-525-Cys-560, Cys-528-Cys-544, and Cys-540-Cys-550. IPT/TIG domains are found at residues 562 to 654, 656 to 738, and 741 to 835; these read PAVY…FSYV, PVIT…FSYR, and PVVY…LTYV. Residue Thr-581 is glycosylated (O-linked (Man) threonine). 2 N-linked (GlcNAc...) asparagine glycosylation sites follow: Asn-606 and Asn-634. Thr-675 and Thr-760 each carry an O-linked (Man) threonine glycan. N-linked (GlcNAc...) asparagine glycans are attached at residues Asn-784 and Asn-878. Residues 932–954 form a helical membrane-spanning segment; that stretch reads GLIIGAVSISVVVLLLSGLFLWM. The Cytoplasmic portion of the chain corresponds to 955–1379; the sequence is RKRKHKDLGS…QDNIDGEGNT (425 aa). A Phosphoserine modification is found at Ser-964. Thr-975 carries the phosphothreonine modification. Ser-988, Ser-995, and Ser-998 each carry phosphoserine. Position 1001 is a phosphotyrosine (Tyr-1001). In terms of domain architecture, Protein kinase spans 1076 to 1343; that stretch reads VHFNEVIGRG…RISSIFSTFI (268 aa). ATP is bound by residues 1082-1090 and Lys-1108; that span reads IGRGHFGCV. Catalysis depends on Asp-1202, which acts as the Proton acceptor. Residues 1210 to 1379 form an interaction with RANBP9 region; the sequence is LDEKFTVKVA…QDNIDGEGNT (170 aa). Residue Tyr-1228 is modified to Phosphotyrosine. Residues Tyr-1232 and Tyr-1233 each carry the phosphotyrosine; by autocatalysis modification. Thr-1287 carries the post-translational modification Phosphothreonine. Residues 1318-1357 form an interaction with MUC20 region; it reads WHPKAEMRPSFSELVSRISSIFSTFIGEHYVHVNATYVNV. A phosphotyrosine; by autocatalysis mark is found at Tyr-1347 and Tyr-1354. Residue Tyr-1363 is modified to Phosphotyrosine.

The protein belongs to the protein kinase superfamily. Tyr protein kinase family. In terms of assembly, heterodimer made of an alpha chain (50 kDa) and a beta chain (145 kDa) which are disulfide linked. Binds PLXNB1. Interacts when phosphorylated with downstream effectors including STAT3, PIK3R1, SRC, PCLG1, GRB2 and GAB1. When phosphorylated at Tyr-1354, interacts with INPPL1/SHIP2. Interacts with RANBP9 and RANBP10. Interacts with INPP5D/SHIP1. Interacts with SPSB1, SPSB2, SPSB4 and probably SPSB3. SPSB1 binding occurs in the presence and in the absence of HGF, however HGF treatment has a positive effect on this interaction. Interacts with MUC20; prevents interaction with GRB2 and suppresses hepatocyte growth factor-induced cell proliferation. Interacts with GRB10. Interacts with PTPN1 and PTPN2. Interacts with HSP90AA1 and HSP90AB1; the interaction suppresses MET kinase activity. Interacts with tensin TNS3. Interacts (when phosphorylated) with tensin TNS4 (via SH2 domain); the interaction increases MET protein stability by inhibiting MET endocytosis and subsequent lysosomal degradation. (Microbial infection) Interacts with L.monocytogenes InlB. InlB probably dimerizes upon binding to MET, which encourages subsequent dimerization of MET. Post-translationally, autophosphorylated in response to ligand binding on Tyr-1232 and Tyr-1233 in the kinase domain leading to further phosphorylation of Tyr-1347 and Tyr-1354 in the C-terminal multifunctional docking site. Dephosphorylated by PTPRJ at Tyr-1347 and Tyr-1363. Dephosphorylated by PTPN1 and PTPN2. Ubiquitinated. Ubiquitination by CBL regulates MET endocytosis, resulting in decreasing plasma membrane receptor abundance, and in endosomal degradation and/or recycling of internalized receptors. In terms of processing, O-mannosylation of IPT/TIG domains by TMEM260 is required for protein maturation. O-mannosylated residues are composed of single mannose glycans that are not elongated or modified. Post-translationally, (Microbial infection) Tyrosine phosphorylation is stimulated by L.monocytogenes InlB.

The protein resides in the membrane. It carries out the reaction L-tyrosyl-[protein] + ATP = O-phospho-L-tyrosyl-[protein] + ADP + H(+). With respect to regulation, in its inactive state, the C-terminal tail interacts with the catalytic domain and inhibits the kinase activity. Upon ligand binding, the C-terminal tail is displaced and becomes phosphorylated, thus increasing the kinase activity. In terms of biological role, receptor tyrosine kinase that transduces signals from the extracellular matrix into the cytoplasm by binding to hepatocyte growth factor/HGF ligand. Regulates many physiological processes including proliferation, scattering, morphogenesis and survival. Ligand binding at the cell surface induces autophosphorylation of MET on its intracellular domain that provides docking sites for downstream signaling molecules. Following activation by ligand, interacts with the PI3-kinase subunit PIK3R1, PLCG1, SRC, GRB2, STAT3 or the adapter GAB1. Recruitment of these downstream effectors by MET leads to the activation of several signaling cascades including the RAS-ERK, PI3 kinase-AKT, or PLCgamma-PKC. The RAS-ERK activation is associated with the morphogenetic effects while PI3K/AKT coordinates prosurvival effects. During embryonic development, MET signaling plays a role in gastrulation, development and migration of neuronal precursors, angiogenesis and kidney formation. During skeletal muscle development, it is crucial for the migration of muscle progenitor cells and for the proliferation of secondary myoblasts. In adults, participates in wound healing as well as organ regeneration and tissue remodeling. Also promotes differentiation and proliferation of hematopoietic cells. May regulate cortical bone osteogenesis. (Microbial infection) Acts as a receptor for Listeria monocytogenes internalin InlB, mediating entry of the pathogen into cells. The sequence is that of Hepatocyte growth factor receptor (Met) from Mus musculus (Mouse).